Here is a 524-residue protein sequence, read N- to C-terminus: 2-isopropylmalate synthase (524 aa).

Residues 12-274 enclose the Pyruvate carboxyltransferase domain; sequence VIIFDTTLRD…WNRIETTMLT (263 aa). Positions 21, 209, 211, and 245 each coordinate Mn(2+). Positions 398 to 524 are regulatory domain; it reads KLMSLTVIAG…EDAPAVAVAG (127 aa).

This sequence belongs to the alpha-IPM synthase/homocitrate synthase family. LeuA type 1 subfamily. Homodimer. Mn(2+) serves as cofactor.

It localises to the cytoplasm. The catalysed reaction is 3-methyl-2-oxobutanoate + acetyl-CoA + H2O = (2S)-2-isopropylmalate + CoA + H(+). The protein operates within amino-acid biosynthesis; L-leucine biosynthesis; L-leucine from 3-methyl-2-oxobutanoate: step 1/4. Functionally, catalyzes the condensation of the acetyl group of acetyl-CoA with 3-methyl-2-oxobutanoate (2-ketoisovalerate) to form 3-carboxy-3-hydroxy-4-methylpentanoate (2-isopropylmalate). The sequence is that of 2-isopropylmalate synthase from Rhodopseudomonas palustris (strain ATCC BAA-98 / CGA009).